Reading from the N-terminus, the 245-residue chain is Probable phosphatase YcdX (245 aa).

Residues histidine 7, histidine 9, histidine 15, histidine 40, glutamate 73, histidine 101, histidine 131, aspartate 192, and histidine 194 each coordinate Zn(2+).

Belongs to the PHP family. Homotrimer. Zn(2+) is required as a cofactor.

The sequence is that of Probable phosphatase YcdX from Escherichia coli (strain K12 / MC4100 / BW2952).